Here is a 272-residue protein sequence, read N- to C-terminus: Putative phosphoenolpyruvate synthase regulatory protein (272 aa).

Gly-152–Thr-159 is a binding site for ADP.

It belongs to the pyruvate, phosphate/water dikinase regulatory protein family. PSRP subfamily.

It carries out the reaction [pyruvate, water dikinase] + ADP = [pyruvate, water dikinase]-phosphate + AMP + H(+). The enzyme catalyses [pyruvate, water dikinase]-phosphate + phosphate + H(+) = [pyruvate, water dikinase] + diphosphate. In terms of biological role, bifunctional serine/threonine kinase and phosphorylase involved in the regulation of the phosphoenolpyruvate synthase (PEPS) by catalyzing its phosphorylation/dephosphorylation. The chain is Putative phosphoenolpyruvate synthase regulatory protein from Hahella chejuensis (strain KCTC 2396).